A 271-amino-acid polypeptide reads, in one-letter code: DNA repair protein RecO (271 aa).

Basic and acidic residues predominate over residues 249–264 (VRVEDSVRQDGDRDST). Residues 249–271 (VRVEDSVRQDGDRDSTTRTSSPA) form a disordered region.

It belongs to the RecO family.

Functionally, involved in DNA repair and RecF pathway recombination. The chain is DNA repair protein RecO from Rhodococcus jostii (strain RHA1).